The following is a 3477-amino-acid chain: Abnormal spindle-like microcephaly-associated protein (3477 aa).

The interval 1-30 (MANRRVGRGCWEVSPTERRPPAGLRGPAAE) is disordered. A phosphoserine mark is found at Ser-280, Ser-283, Ser-367, and Ser-392. The sufficient for interaction with KATNA1:KATNB1 stretch occupies residues 308 to 409 (ITQSQIHFLS…NMAYMCTSQQ (102 aa)). The segment covering 415 to 424 (LSNENSQVPQ) has biased composition (polar residues). Disordered stretches follow at residues 415–443 (LSNE…ECQG) and 559–581 (KNEV…DGSM). Ser-425 is subject to Phosphoserine. A compositionally biased stretch (polar residues) spans 560–570 (NEVTPSSTTAS). Phosphoserine is present on Ser-605. One can recognise a Calponin-homology (CH) 1 domain in the interval 920–1056 (KASKEILLAF…LLWKIAFAFQ (137 aa)). Residues 1057 to 1078 (VDISLNLDQLKEEIAFLKHTKS) adopt a coiled-coil conformation. Ser-1103 carries the phosphoserine modification. The Calponin-homology (CH) 2 domain maps to 1110–1261 (SENIKLLMDW…YLSFLCARLL (152 aa)). 39 consecutive IQ domains span residues 1347-1378 (QNKA…IILQ), 1393-1422 (YLWA…MLKS), 1582-1613 (LKKT…VIIQ), 1632-1661 (TRSA…SVIK), 1655-1684 (ILTS…ATIK), 1728-1757 (MRES…AVIS), 1751-1782 (QRKA…IVIQ), 1801-1830 (VKKA…AALK), 1824-1853 (QSIA…SIIK), 1874-1903 (TKAA…AALK), 1897-1928 (EHQA…LVIQ), 1947-1978 (LRHA…IIIQ), 1970-2001 (QHKC…LLIQ), 2020-2049 (TKAA…AAVT), 2043-2074 (CNKA…IIIQ), 2093-2124 (LKKT…TFIK), 2116-2147 (MHRA…IVIQ), 2166-2197 (ILKA…TLIQ), 2189-2218 (MQTA…ITKT), 2239-2270 (LRHS…TLIQ), 2262-2293 (MHIA…ILIQ), 2311-2342 (VQNA…TFIQ), 2334-2365 (MHRA…VVIQ), 2384-2415 (QRHS…TLIQ), 2407-2438 (MHSS…IFVQ), 2457-2488 (LRKA…VLIQ), 2530-2561 (QWHS…IVIQ), 2624-2653 (QHQA…TVVS), 2665-2696 (RTQA…TLIQ), 2688-2719 (MHRA…VVIQ), 2738-2767 (VQKS…EKMA), 2859-2890 (QKRA…VVLQ), 2909-2938 (IRSS…STIK), 2932-2963 (IKNS…KIQA), 2954-2985 (KVKA…KIIQ), 3029-3060 (RHRA…LIIQ), 3079-3110 (FKKS…RLLH), 3181-3210 (RNRA…GIIK), and 3204-3235 (FTSG…IRLS).

In terms of assembly, interacts with KATNA1 and KATNB1; katanin complex formation KATNA1:KATNB1 is required for the association.

It is found in the cytoplasm. It localises to the cytoskeleton. The protein resides in the spindle. Its subcellular location is the nucleus. Involved in mitotic spindle regulation and coordination of mitotic processes. The function in regulating microtubule dynamics at spindle poles including spindle orientation, astral microtubule density and poleward microtubule flux seems to depend on the association with the katanin complex formed by KATNA1 and KATNB1. Enhances the microtubule lattice severing activity of KATNA1 by recruiting the katanin complex to microtubules. Can block microtubule minus-end growth and reversely this function can be enhanced by the katanin complex. May have a preferential role in regulating neurogenesis. This is Abnormal spindle-like microcephaly-associated protein (ASPM) from Homo sapiens (Human).